The primary structure comprises 174 residues: DNA endonuclease I-HmuI (174 aa).

This Bacillus subtilis (Bacteriophage SP01) protein is DNA endonuclease I-HmuI.